A 490-amino-acid polypeptide reads, in one-letter code: (21S)-21-acetyl-1-hydroxy-apo-melianone synthase CYP88A164 (490 aa).

The helical transmembrane segment at aspartate 4–leucine 24 threads the bilayer. A heme-binding site is contributed by cysteine 438.

This sequence belongs to the cytochrome P450 family. The cofactor is heme. As to expression, mainly expressed in petioles and, to a lower extent, in roots.

The protein resides in the membrane. The enzyme catalyses (21S)-21-acetoxyl-apo-melianone + reduced [NADPH--hemoprotein reductase] + O2 = (21S)-21-acetyl-1-hydroxy-apo-melianone + oxidized [NADPH--hemoprotein reductase] + H2O + H(+). The protein operates within secondary metabolite biosynthesis; terpenoid biosynthesis. In terms of biological role, monooxygenase involved in the biosynthesis of limonoids triterpene natural products such as azadirachtin, an antifeedant widely used as bioinsecticide, and possessing many medicinal applications including anti-tumoral, anti-malarial, anti-rheumatic, antibacterial, anti-inflammatory, anti-pyretic and diuretic effects. Catalyzes the conversion of (21S)-21-acetoxyl-apo-melianone to (21S)-21-acetyl-1-hydroxy-apo-melianone. In Melia azedarach (Chinaberry tree), this protein is (21S)-21-acetyl-1-hydroxy-apo-melianone synthase CYP88A164.